A 170-amino-acid chain; its full sequence is Putative apoptosis inhibitor ORF87 (170 aa).

2 BIR repeats span residues 22 to 92 (RIKS…PVGK) and 104 to 169 (RLKS…KLSS).

Its function is as follows. May act as an apoptosis inhibitor. This is Putative apoptosis inhibitor ORF87 from Ostreid herpesvirus 1 (isolate France) (OsHV-1).